The chain runs to 311 residues: p-hydroxybenzoic acid efflux pump subunit AaeA (311 aa).

A helical membrane pass occupies residues 11–31 (IAITLILVLLGIIAIFKAWVF).

This sequence belongs to the membrane fusion protein (MFP) (TC 8.A.1) family.

It localises to the cell inner membrane. Its function is as follows. Forms an efflux pump with AaeB. This Serratia proteamaculans (strain 568) protein is p-hydroxybenzoic acid efflux pump subunit AaeA.